Here is a 333-residue protein sequence, read N- to C-terminus: Photosystem II assembly lipoprotein Ycf48 (333 aa).

Residues 1 to 23 (MKRLLNSATQLLLVLVLGISLSG) form the signal peptide. Residue cysteine 24 is the site of N-palmitoyl cysteine attachment. Cysteine 24 carries S-diacylglycerol cysteine lipidation.

The protein belongs to the Ycf48 family. Part of early PSII assembly complexes which includes D1 (psbA) and PsbI; not found in mature PSII. Binds to the lumenal side of PSII complexes. Interacts with YidC.

It is found in the cellular thylakoid membrane. A factor required for optimal assembly of photosystem II (PSII), acting in the early stages of PSII assembly. Also plays a role in replacement of photodamaged D1 (psbA). Assists YidC in synthesis of chlorophyll-binding proteins. This chain is Photosystem II assembly lipoprotein Ycf48, found in Synechococcus sp. (strain CC9605).